Consider the following 438-residue polypeptide: Protein DJ-1 homolog B (438 aa).

The transit peptide at 1–45 (MASSSLCHRYFNKITVTPFFNTKKLHHYSPRRISLRVNRRSFSIS) directs the protein to the chloroplast. PfpI endopeptidase domains follow at residues 53 to 220 (KKVL…EQLL) and 258 to 424 (PQIL…EKFY).

Belongs to the peptidase C56 family. Homodimer.

It localises to the plastid. The protein resides in the chloroplast. Functionally, may be involved in oxidative stress response. This chain is Protein DJ-1 homolog B (DJ1B), found in Arabidopsis thaliana (Mouse-ear cress).